The primary structure comprises 213 residues: Ribosomal RNA large subunit methyltransferase E (213 aa).

Glycine 60, tryptophan 62, aspartate 80, aspartate 96, and aspartate 121 together coordinate S-adenosyl-L-methionine. Lysine 161 serves as the catalytic Proton acceptor.

Belongs to the class I-like SAM-binding methyltransferase superfamily. RNA methyltransferase RlmE family.

Its subcellular location is the cytoplasm. The catalysed reaction is uridine(2552) in 23S rRNA + S-adenosyl-L-methionine = 2'-O-methyluridine(2552) in 23S rRNA + S-adenosyl-L-homocysteine + H(+). Functionally, specifically methylates the uridine in position 2552 of 23S rRNA at the 2'-O position of the ribose in the fully assembled 50S ribosomal subunit. This Xylella fastidiosa (strain 9a5c) protein is Ribosomal RNA large subunit methyltransferase E.